The sequence spans 525 residues: Serine/threonine-protein kinase YPK3 (525 aa).

Phosphoserine is present on residues Ser90 and Ser105. Thr107 carries the post-translational modification Phosphothreonine. Positions 128–424 constitute a Protein kinase domain; it reads FKPVRVLGQG…KTGANNKPTK (297 aa). Residues 134-142 and Lys157 each bind ATP; that span reads LGQGAYGKV. Residues 170-193 form a disordered region; that stretch reads ATDSKREDEDKNDGNNNDNDDGLS. The span at 172 to 182 shows a compositional bias: basic and acidic residues; sequence DSKREDEDKND. Catalysis depends on Asp277, which acts as the Proton acceptor. Residue Ser321 is modified to Phosphoserine; by PKH1 or PKH2. The region spanning 445-524 is the AGC-kinase C-terminal domain; it reads RKIDWKLLES…KASGSYLEKY (80 aa). Phosphothreonine; by TORC1 is present on Thr490. Ser513 carries the phosphoserine; by TORC1 modification.

This sequence belongs to the protein kinase superfamily. AGC Ser/Thr protein kinase family. S6 kinase subfamily. Phosphorylated by PKA in a TORC1-dependent manner. Phosphorylation at PKA consensus sites RRxS/T decreases upon rapamycin treatment.

The protein resides in the cytoplasm. It catalyses the reaction L-seryl-[protein] + ATP = O-phospho-L-seryl-[protein] + ADP + H(+). The catalysed reaction is L-threonyl-[protein] + ATP = O-phospho-L-threonyl-[protein] + ADP + H(+). AGC kinase which plays a role in TOR complex 1 (TORC1) signaling pathway which mediates temporal control of cell growth in response to nutrients. Required for phosphorylation of ribosomal protein S6 (RPS6A/RPS6B) at 'Ser-232' and 'Ser-233'. The chain is Serine/threonine-protein kinase YPK3 from Saccharomyces cerevisiae (strain ATCC 204508 / S288c) (Baker's yeast).